The chain runs to 522 residues: Transmembrane protein 213R (522 aa).

Transmembrane regions (helical) follow at residues 33 to 50 (NTIT…LLFG) and 55 to 72 (SLYI…IYSQ).

Belongs to the IIV-6 213R family.

It localises to the membrane. This is Transmembrane protein 213R from Invertebrate iridescent virus 6 (IIV-6).